The sequence spans 2606 residues: Large tegument protein deneddylase (2606 aa).

A deubiquitination activity region spans residues 1-235 (MAFQAQTDTG…LKRSGAYVNL (235 aa)). Positions 14-225 (LATASSHQGD…LLANYGIASA (212 aa)) constitute a Peptidase C76 domain. Catalysis depends on residues C34, D163, and H165. Disordered stretches follow at residues 318-349 (IAISPLHSNTESDDSETGKKNTPVKITKPNEA), 390-411 (DTDSLLSTHESPPATPSLKSGQ), 1020-1135 (KKGL…ESSE), 2253-2316 (PEIH…PTPL), and 2434-2458 (PPHDFVEPVENGDPPGPPGSEERKY). A compositionally biased stretch (polar residues) spans 1038–1050 (TPVTDSKLIQDSQ). A compositionally biased stretch (basic and acidic residues) spans 1051–1061 (QNDRHQKEKPL). The span at 1085-1097 (KPQNLSLPVSTNK) shows a compositional bias: polar residues. Residues 1105–1132 (ESSPIESTSPSHSPVSSMESQNGSFSLE) show a composition bias toward low complexity. Residues 2304–2316 (PNPPRPTTFPTPL) are compositionally biased toward pro residues.

It belongs to the herpesviridae large tegument protein family. Interacts with host CUL1 and CUL4A; these interactions inhibit the E3 ligase activity of cullins. Interacts with inner tegument protein. Interacts with capsid vertex specific component CVC2. Interacts with the major capsid protein/MCP.

It localises to the virion tegument. The protein resides in the host cytoplasm. Its subcellular location is the host nucleus. It carries out the reaction Thiol-dependent hydrolysis of ester, thioester, amide, peptide and isopeptide bonds formed by the C-terminal Gly of ubiquitin (a 76-residue protein attached to proteins as an intracellular targeting signal).. Functionally, large tegument protein that plays multiple roles in the viral cycle. During viral entry, remains associated with the capsid while most of the tegument is detached and participates in the capsid transport toward the host nucleus. Plays a role in the routing of the capsid at the nuclear pore complex and subsequent uncoating. Within the host nucleus, acts as a deneddylase and promotes the degradation of nuclear CRLs (cullin-RING ubiquitin ligases) and thereby stabilizes nuclear CRL substrates, while cytoplasmic CRLs remain unaffected. These modifications prevent host cell cycle S-phase progression and create a favorable environment allowing efficient viral genome replication. Participates later in the secondary envelopment of capsids. Indeed, plays a linker role for the association of the outer viral tegument to the capsids together with the inner tegument protein. This chain is Large tegument protein deneddylase (64), found in Connochaetes taurinus (Blue wildebeest).